Consider the following 479-residue polypeptide: Glutamate--tRNA ligase (479 aa).

The 'HIGH' region signature appears at 9–19 (PSPTGNLHIGT). Residues 243–247 (KLSKR) carry the 'KMSKS' region motif. Residue lysine 246 coordinates ATP.

The protein belongs to the class-I aminoacyl-tRNA synthetase family. Glutamate--tRNA ligase type 1 subfamily. In terms of assembly, monomer.

It is found in the cytoplasm. It catalyses the reaction tRNA(Glu) + L-glutamate + ATP = L-glutamyl-tRNA(Glu) + AMP + diphosphate. In terms of biological role, catalyzes the attachment of glutamate to tRNA(Glu) in a two-step reaction: glutamate is first activated by ATP to form Glu-AMP and then transferred to the acceptor end of tRNA(Glu). This chain is Glutamate--tRNA ligase, found in Synechococcus sp. (strain JA-2-3B'a(2-13)) (Cyanobacteria bacterium Yellowstone B-Prime).